We begin with the raw amino-acid sequence, 299 residues long: Inosose dehydratase (299 aa).

This sequence belongs to the IolE/MocC family. The cofactor is glutathione. Co(2+) serves as cofactor. Requires Mn(2+) as cofactor.

It catalyses the reaction scyllo-inosose = 3D-3,5/4-trihydroxycyclohexane-1,2-dione + H2O. Catalyzes the dehydration of inosose (2-keto-myo-inositol, 2KMI or 2,4,6/3,5-pentahydroxycyclohexanone) to 3D-(3,5/4)-trihydroxycyclohexane-1,2-dione (D-2,3-diketo-4-deoxy-epi-inositol). This chain is Inosose dehydratase, found in Klebsiella pneumoniae (strain 342).